A 122-amino-acid polypeptide reads, in one-letter code: Large ribosomal subunit protein uL18 (122 aa).

Residues 1-27 (MATLSKKQQTQKRHKRLRRHLNGTNHR) are disordered. Residues 9–27 (QTQKRHKRLRRHLNGTNHR) are compositionally biased toward basic residues.

This sequence belongs to the universal ribosomal protein uL18 family. In terms of assembly, part of the 50S ribosomal subunit; part of the 5S rRNA/L5/L18/L25 subcomplex. Contacts the 5S and 23S rRNAs.

In terms of biological role, this is one of the proteins that bind and probably mediate the attachment of the 5S RNA into the large ribosomal subunit, where it forms part of the central protuberance. The chain is Large ribosomal subunit protein uL18 from Prochlorococcus marinus (strain MIT 9211).